Reading from the N-terminus, the 927-residue chain is Non-lysosomal glucosylceramidase (927 aa).

Positions E32–P62 are disordered. Residues K46–D58 show a composition bias toward basic and acidic residues.

This sequence belongs to the non-lysosomal glucosylceramidase family. In terms of tissue distribution, widely expressed. Mainly expressed in brain, heart, skeletal muscle, kidney and placenta and expressed at lower levels in liver, spleen, small intestine and lung. Detectable in colon, thymus and peripheral blood leukocytes.

The protein localises to the endoplasmic reticulum membrane. The protein resides in the golgi apparatus membrane. The catalysed reaction is a beta-D-glucosyl-(1&lt;-&gt;1')-N-acylsphing-4-enine + H2O = an N-acylsphing-4-enine + D-glucose. It catalyses the reaction a beta-D-galactosyl-(1&lt;-&gt;1')-N-acylsphing-4-enine + H2O = an N-acylsphing-4-enine + D-galactose. The enzyme catalyses beta-D-glucosyl-(1-&gt;3)-O-lithocholate + H2O = lithocholate + D-glucose. It carries out the reaction beta-D-glucosyl-(1-&gt;3)-O-chenodeoxycholate + H2O = chenodeoxycholate + D-glucose. The catalysed reaction is a di-trans,poly-cis-dolichyl beta-D-glucosyl phosphate + chenodeoxycholate = beta-D-glucosyl-(1-&gt;3)-O-chenodeoxycholate + a di-trans,poly-cis-dolichyl phosphate + H(+). It catalyses the reaction octyl beta-D-glucose + chenodeoxycholate = beta-D-glucosyl-(1-&gt;3)-O-chenodeoxycholate + octan-1-ol. The enzyme catalyses cholesteryl 3-beta-D-glucoside + H2O = cholesterol + D-glucose. It carries out the reaction a beta-D-glucosyl-(1&lt;-&gt;1')-N-acylsphing-4-enine + cholesterol = cholesteryl 3-beta-D-glucoside + an N-acylsphing-4-enine. The catalysed reaction is beta-D-glucosyl-N-(9Z-octadecenoyl)-sphing-4E-enine + cholesterol = N-(9Z-octadecenoyl)-sphing-4-enine + cholesteryl 3-beta-D-glucoside. It catalyses the reaction a beta-D-galactosyl-(1&lt;-&gt;1')-N-acylsphing-4-enine + cholesterol = cholesteryl 3-beta-D-galactoside + an N-acylsphing-4-enine. The enzyme catalyses 1-(beta-D-galactosyl)-N-dodecanoylsphing-4-enine + cholesterol = cholesteryl 3-beta-D-galactoside + N-dodecanoylsphing-4-enine. It participates in lipid metabolism; sphingolipid metabolism. It functions in the pathway steroid metabolism; cholesterol metabolism. With respect to regulation, inhibited by AMP-DMN/N -((5-adamantane-1-yl-methoxy)pentyl)-deoxynojirimycin. Activated by Mn(2+), Co(2+) and Mg(2+) and inhibited by Zn(2+). Enzymatic activity is dependent on membrane association and requires the presence of lipids. The membrane-associated enzyme is not inhibited by condutiriol B epoxide and bromocondutiriol B epoxide. Functionally, non-lysosomal glucosylceramidase that catalyzes the hydrolysis of glucosylceramides/GlcCers (such as beta-D-glucosyl-(1&lt;-&gt;1')-N-acylsphing-4-enine) to free glucose and ceramides (such as N-acylsphing-4-enine). GlcCers are membrane glycosphingolipids that have a wide intracellular distribution. They are the main precursors of more complex glycosphingolipids that play a role in cellular growth, differentiation, adhesion, signaling, cytoskeletal dynamics and membrane properties. Involved in the transglucosylation of cholesterol, transfers glucose from GlcCer to cholesterol, thereby modifying its water solubility and biological properties. Under specific conditions, may catalyze the reverse reaction, transferring glucose from cholesteryl-3-beta-D-glucoside to ceramide (such as N-acylsphing-4-enine). May play a role in the metabolism of bile acids. Able to hydrolyze bile acid 3-O-glucosides as well as to produce bile acid-glucose conjugates thanks to a bile acid glucosyl transferase activity. Catalyzes the hydrolysis of galactosylceramides/GalCers (such as beta-D-galactosyl-(1&lt;-&gt;1')-N-acylsphing-4-enine), as well as the galactosyl transfer between GalCers and cholesterol in vitro with lower activity compared with their activity against GlcCers. The polypeptide is Non-lysosomal glucosylceramidase (Homo sapiens (Human)).